The following is a 279-amino-acid chain: Pantothenate synthetase (279 aa).

27–34 provides a ligand contact to ATP; sequence MGYLHEGH. H34 (proton donor) is an active-site residue. (R)-pantoate is bound at residue Q58. Q58 serves as a coordination point for beta-alanine. ATP is bound at residue 144-147; it reads GKKD. Q150 contacts (R)-pantoate. ATP-binding positions include V173 and 181–184; that span reads MSSR.

The protein belongs to the pantothenate synthetase family. Homodimer.

It is found in the cytoplasm. It catalyses the reaction (R)-pantoate + beta-alanine + ATP = (R)-pantothenate + AMP + diphosphate + H(+). Its pathway is cofactor biosynthesis; (R)-pantothenate biosynthesis; (R)-pantothenate from (R)-pantoate and beta-alanine: step 1/1. Its function is as follows. Catalyzes the condensation of pantoate with beta-alanine in an ATP-dependent reaction via a pantoyl-adenylate intermediate. This is Pantothenate synthetase from Geobacter sp. (strain M21).